The chain runs to 249 residues: Probable cobalt-factor III C(17)-methyltransferase (249 aa).

Belongs to the precorrin methyltransferase family.

It carries out the reaction Co(II)-factor III + S-adenosyl-L-methionine + H(+) = Co(II)-factor IV + S-adenosyl-L-homocysteine. It functions in the pathway cofactor biosynthesis; adenosylcobalamin biosynthesis; cob(II)yrinate a,c-diamide from sirohydrochlorin (anaerobic route): step 3/10. Functionally, methyltransferase that likely catalyzes the ring contraction and methylation of C-17 in cobalt-factor III to form cobalt-factor IV. May also convert cobalt-precorrin-3 to cobalt-precorrin-4. This chain is Probable cobalt-factor III C(17)-methyltransferase (cbiH), found in Methanocaldococcus jannaschii (strain ATCC 43067 / DSM 2661 / JAL-1 / JCM 10045 / NBRC 100440) (Methanococcus jannaschii).